The primary structure comprises 378 residues: Biotin synthase, mitochondrial (378 aa).

The N-terminal 26 residues, 1–26 (MMLVRSVFRSQLRPSVSGGLQSASCY), are a transit peptide targeting the mitochondrion. Positions 79 to 308 (REVQQCTLLS…KAMVRLSAGR (230 aa)) constitute a Radical SAM core domain. 3 residues coordinate [4Fe-4S] cluster: cysteine 94, cysteine 98, and cysteine 101. 4 residues coordinate [2Fe-2S] cluster: cysteine 138, cysteine 171, cysteine 231, and arginine 303. Residues 357–378 (PPSFSEDDSESENCEKVASASH) form a disordered region.

The protein belongs to the radical SAM superfamily. Biotin synthase family. The cofactor is [4Fe-4S] cluster. [2Fe-2S] cluster is required as a cofactor.

It localises to the mitochondrion. The catalysed reaction is (4R,5S)-dethiobiotin + (sulfur carrier)-SH + 2 reduced [2Fe-2S]-[ferredoxin] + 2 S-adenosyl-L-methionine = (sulfur carrier)-H + biotin + 2 5'-deoxyadenosine + 2 L-methionine + 2 oxidized [2Fe-2S]-[ferredoxin]. The protein operates within cofactor biosynthesis; biotin biosynthesis; biotin from 7,8-diaminononanoate: step 2/2. This Arabidopsis thaliana (Mouse-ear cress) protein is Biotin synthase, mitochondrial (BIO2).